Here is a 200-residue protein sequence, read N- to C-terminus: Phosphoheptose isomerase (200 aa).

An SIS domain is found at 37 to 199 (VLGCITAGGK…DVQLLGEQDL (163 aa)). 52–54 (NGG) contacts substrate. Positions 61 and 65 each coordinate Zn(2+). Residues Glu-65, 94-95 (ND), 120-122 (TTS), Ser-125, and Gln-175 contribute to the substrate site. Gln-175 and His-183 together coordinate Zn(2+).

Belongs to the SIS family. GmhA subfamily. In terms of assembly, homotetramer. It depends on Zn(2+) as a cofactor.

It is found in the cytoplasm. It carries out the reaction 2 D-sedoheptulose 7-phosphate = D-glycero-alpha-D-manno-heptose 7-phosphate + D-glycero-beta-D-manno-heptose 7-phosphate. It participates in carbohydrate biosynthesis; D-glycero-D-manno-heptose 7-phosphate biosynthesis; D-glycero-alpha-D-manno-heptose 7-phosphate and D-glycero-beta-D-manno-heptose 7-phosphate from sedoheptulose 7-phosphate: step 1/1. In terms of biological role, catalyzes the isomerization of sedoheptulose 7-phosphate in D-glycero-D-manno-heptose 7-phosphate. The chain is Phosphoheptose isomerase from Methylibium petroleiphilum (strain ATCC BAA-1232 / LMG 22953 / PM1).